The sequence spans 439 residues: tRNA modification GTPase MnmE (439 aa).

The (6S)-5-formyl-5,6,7,8-tetrahydrofolate site is built by Arg-24, Glu-81, and Lys-121. One can recognise a TrmE-type G domain in the interval 218-363 (GFKVVIAGAP…LRRLIGDIVE (146 aa)). K(+) is bound at residue Asn-228. Residues 228–233 (NAGKSS), 247–253 (TEIAGTT), and 272–275 (DTAG) contribute to the GTP site. Residue Ser-232 participates in Mg(2+) binding. K(+) contacts are provided by Thr-247, Ile-249, and Thr-252. A Mg(2+)-binding site is contributed by Thr-253. Lys-439 is a (6S)-5-formyl-5,6,7,8-tetrahydrofolate binding site.

Belongs to the TRAFAC class TrmE-Era-EngA-EngB-Septin-like GTPase superfamily. TrmE GTPase family. In terms of assembly, homodimer. Heterotetramer of two MnmE and two MnmG subunits. K(+) serves as cofactor.

It is found in the cytoplasm. Its function is as follows. Exhibits a very high intrinsic GTPase hydrolysis rate. Involved in the addition of a carboxymethylaminomethyl (cmnm) group at the wobble position (U34) of certain tRNAs, forming tRNA-cmnm(5)s(2)U34. This is tRNA modification GTPase MnmE from Rhizobium johnstonii (strain DSM 114642 / LMG 32736 / 3841) (Rhizobium leguminosarum bv. viciae).